A 170-amino-acid chain; its full sequence is Cathelicidin antimicrobial peptide (170 aa).

The first 30 residues, 1–30 (MKTQRHGPSLGRWSLVLLLLGLVMPLAIVA), serve as a signal peptide directing secretion. A propeptide spans 31 to 131 (QVLSYQEAVL…DISCDKDNRR (101 aa)) (cathelin-like domain (CLD)). Disulfide bonds link Cys86–Cys97 and Cys108–Cys125. An active core region spans residues 150–162 (LKKIGQKIKDFLG).

It belongs to the cathelicidin family. As to quaternary structure, monomer, homodimer or homotrimer (in vitro). Oligomerizes as tetra- or hexamer in solution (in vitro). In terms of processing, proteolytically cleaved by proteinase PRTN3 into antibacterial peptide LL-37. Proteolytically cleaved by cathepsin CTSG and neutrophil elastase ELANE. Resistant to proteolytic degradation in solution, and when bound to both zwitterionic (mimicking mammalian membranes) and negatively charged membranes (mimicking bacterial membranes). Post-translationally, after secretion onto the skin surface, the CAMP gene product is processed by a serine protease-dependent mechanism into multiple novel antimicrobial peptides distinct from and shorter than cathelicidin LL-37. These peptides show enhanced antimicrobial action, acquiring the ability to kill skin pathogens such as S.aureus, E.coli and C.albicans. These peptides have lost the ability to stimulate CXCL8/IL8 release from keratinocytes. The peptides act synergistically, killing bacteria at lower concentrations when present together, and maintain activity at increased salt condition.

Its subcellular location is the secreted. The protein localises to the vesicle. Its function is as follows. Antimicrobial protein that is an integral component of the innate immune system. Binds to bacterial lipopolysaccharides (LPS). Acts via neutrophil N-formyl peptide receptors to enhance the release of CXCL2. Postsecretory processing generates multiple cathelicidin antimicrobial peptides with various lengths which act as a topical antimicrobial defense in sweat on skin. The unprocessed precursor form, cathelicidin antimicrobial peptide, inhibits the growth of Gram-negative E.coli and E.aerogenes with efficiencies comparable to that of the mature peptide LL-37 (in vitro). Antimicrobial peptide that is an integral component of the innate immune system. Binds to bacterial lipopolysaccharides (LPS). Causes membrane permeabilization by forming transmembrane pores (in vitro). Causes lysis of E.coli. Exhibits antimicrobial activity against Gram-negative bacteria such as P.aeruginosa, S.typhimurium, E.aerogenes, E.coli and P.syringae, Gram-positive bacteria such as L.monocytogenes, S.epidermidis, S.pyogenes and S.aureus, as well as vancomycin-resistant enterococci (in vitro). Exhibits antimicrobial activity against methicillin-resistant S.aureus, P.mirabilis, and C.albicans in low-salt media, but not in media containing 100 mM NaCl (in vitro). Forms chiral supramolecular assemblies with quinolone signal (PQS) molecules of P.aeruginosa, which may lead to interference of bacterial quorum signaling and perturbance of bacterial biofilm formation. May form supramolecular fiber-like assemblies on bacterial membranes. Induces cytokine and chemokine producation as well as TNF/TNFA and CSF2/GMCSF production in normal human keratinocytes. Exhibits hemolytic activity against red blood cells. In terms of biological role, exhibits antimicrobial activity against E.coli and B.megaterium (in vitro). The sequence is that of Cathelicidin antimicrobial peptide from Trachypithecus obscurus (Dusky leaf-monkey).